Consider the following 793-residue polypeptide: MEARVERAVQKRQVLFLCVFLGMSWAGAEPLRYFVAEETERGTFLTNLAKDLGLGVGELRARGTRIVSDQNMQILLLSSLTGDLLLNEKLDREELCGPREPCVLPFQLLLEKPFQIFRAELWVRDINDHAPVFLDREISLKILESTTPGAAFLLESAQDSDVGTNSLSNYTISPNAYFHINVHDSGEGNIYPELVLNQVLDREEIPEFSLTLTALDGGSPPRSGTALVRILVLDVNDNAPDFVRSLYKVQVPENSPVGSMVVSVSARDLDTGSNGEIAYAFSYATERILKTFQINPTSGNLHLKAQLDYEAIQTYTLTIQAKDGGGLSGKCTVVVDVTDINDNRPELLLSSLTSPIAENSPETVVAVFRIRDRDSGNNGKTVCSIQDDLPFILKPSVENFYTLVSEKPLDRERNTEYNITITVTDLGTPRLKTEHNITVLVSDVNDNAPAFTQTSYTLFVRENNSPALPIGSVSATDRDSGTNAQVIYSLLPSQDPHLPLSSLVSINADNGHLFALRSLDYEALQAFEFRVGATDRSSPALSSEALVHVLVLDANDNSPFVLYPLQNSSAPCTEPLPRAAEPGYLVTKVVAVDGDSGQNAWLSYQLLKATEPGLFGVWAHNGEVRTARLLSERDAAKQRLVVLVKDNGEPPRSATATLHVLLVDGFSQPYLRLPEAAPDQANLLTVYLVVALASVSSLFLLSVLLFVAVRLCRRSRAAPVGRCSVPEGPFPRHLVDLSGTGTLSQSYQYEVCLTGGSGTNEFKFLKPIIPNLLPQSTGREVEENRPFQNNLGF.

An N-terminal signal peptide occupies residues 1–26; that stretch reads MEARVERAVQKRQVLFLCVFLGMSWA. Residues 27–688 lie on the Extracellular side of the membrane; the sequence is GAEPLRYFVA…DQANLLTVYL (662 aa). 5 Cadherin domains span residues 35 to 133, 138 to 242, 247 to 347, 352 to 451, and 456 to 561; these read VAEE…APVF, ISLK…APDF, YKVQ…RPEL, LTSP…APAF, and YTLF…SPFV. A glycan (N-linked (GlcNAc...) asparagine) is linked at asparagine 169. Residues asparagine 418 and asparagine 436 are each glycosylated (N-linked (GlcNAc...) asparagine). An N-linked (GlcNAc...) asparagine glycan is attached at asparagine 567. Residues 568–671 enclose the Cadherin 6 domain; the sequence is SSAPCTEPLP…LVDGFSQPYL (104 aa). The chain crosses the membrane as a helical span at residues 689–709; it reads VVALASVSSLFLLSVLLFVAV. Residues 710 to 793 are Cytoplasmic-facing; that stretch reads RLCRRSRAAP…NRPFQNNLGF (84 aa).

Its subcellular location is the cell membrane. Potential calcium-dependent cell-adhesion protein. May be involved in the establishment and maintenance of specific neuronal connections in the brain. This chain is Protocadherin beta-7 (PCDHB7), found in Pan troglodytes (Chimpanzee).